A 142-amino-acid chain; its full sequence is Transcriptional regulator MraZ (142 aa).

2 consecutive SpoVT-AbrB domains span residues 5-47 (EYNH…PLGE) and 76-119 (ANEV…SKEK).

It belongs to the MraZ family. Forms oligomers.

The protein localises to the cytoplasm. Its subcellular location is the nucleoid. The sequence is that of Transcriptional regulator MraZ from Clostridium acetobutylicum (strain ATCC 824 / DSM 792 / JCM 1419 / IAM 19013 / LMG 5710 / NBRC 13948 / NRRL B-527 / VKM B-1787 / 2291 / W).